We begin with the raw amino-acid sequence, 404 residues long: Starvation-sensing protein RspA (404 aa).

The protein belongs to the mandelate racemase/muconate lactonizing enzyme family.

Probably involved in the degradation of homoserine lactone (HSL) or of a metabolite of HSL that signals starvation. The sequence is that of Starvation-sensing protein RspA from Escherichia coli (strain K12).